The following is a 316-amino-acid chain: Epiphycan (316 aa).

The first 23 residues, 1 to 23, serve as a signal peptide directing secretion; it reads MKTFVNIFLGFFIFESVGAVPIT. A glycan (O-linked (Xyl...) (dermatan sulfate) serine) is linked at serine 98. The region spanning 100–137 is the LRRNT domain; sequence VLVPQTQDGLPTCLLCTCLGTTVYCDDRELDAVPPLPK. Residues cysteine 112 and cysteine 124 are joined by a disulfide bond. LRR repeat units lie at residues 138-159, 162-183, 186-207, 232-252, 253-274, and 284-304; these read NTMY…DFAN, NLKR…AFRR, QLLE…PSTL, ELQH…PLPE, SLQA…TFCK, and ALED…PYAY. Cysteine 273 and cysteine 306 are joined by a disulfide. A glycan (N-linked (GlcNAc...) asparagine) is linked at asparagine 296.

This sequence belongs to the small leucine-rich proteoglycan (SLRP) family. SLRP class III subfamily. Post-translationally, the O-linked glycosaminoglycan chain(s) are dermatan sulfate. As to expression, preferentially expressed in flattened chondrocytes of developing chick limb cartilage. Also found in the cartilage peripheral zone bordering with bone marrow cavity.

Its subcellular location is the secreted. It localises to the extracellular space. The protein resides in the extracellular matrix. May have a role in bone formation and also in establishing the ordered structure of cartilage through matrix organization. This chain is Epiphycan (EPYC), found in Gallus gallus (Chicken).